Consider the following 446-residue polypeptide: Tetratricopeptide repeat protein 23 (446 aa).

4 TPR repeats span residues 45–78 (LHLC…TKIC), 137–170 (LELF…SKEM), 186–219 (SRIK…TETT), and 356–389 (AETY…ETFL).

Associated with the EvC complex composed of EFCAB7, IQCE, EVC2 and EVC.

Its subcellular location is the cell projection. It localises to the cilium. Functionally, participates positively in the ciliary Hedgehog (Hh) signaling. The chain is Tetratricopeptide repeat protein 23 (Ttc23) from Rattus norvegicus (Rat).